We begin with the raw amino-acid sequence, 111 residues long: Ig kappa chain V region 3368 (111 aa).

Residues 1–24 (ADIVMTQTPSSVSAAVGGTVTIKC) are framework-1. Positions 25–35 (QASESIGNELA) are complementarity-determining-1. The segment at 36 to 50 (WYQQKPGQPPKLLIY) is framework-2. Residues 51–57 (RASKLAS) are complementarity-determining-2. The interval 58-89 (GVSSRFKGSGSGTEFTLTISGVQCDDAGIYYC) is framework-3. The tract at residues 90–101 (QQDWNSNNVVNN) is complementarity-determining-3. Positions 102 to 111 (FGGGTEVVVK) are framework-4.

The sequence is that of Ig kappa chain V region 3368 from Oryctolagus cuniculus (Rabbit).